Consider the following 457-residue polypeptide: Galactose/lactose metabolism regulatory protein GAL80 (457 aa).

Residues Asn-333–Gln-364 form a disordered region.

This sequence to yeast GAL80.

Functionally, this protein is a negative regulator for the gene expression of the lactose/galactose metabolic genes. It seems to block activation by the transcriptional activator LAC9 in the absence of an inducing sugar. This is Galactose/lactose metabolism regulatory protein GAL80 (GAL80) from Kluyveromyces lactis (strain ATCC 8585 / CBS 2359 / DSM 70799 / NBRC 1267 / NRRL Y-1140 / WM37) (Yeast).